Reading from the N-terminus, the 901-residue chain is HTH-type transcriptional regulator MalT (901 aa).

Residue 39-46 (SPAGYGKT) coordinates ATP. Residues 829–894 (ELIRTSPLTQ…DAVQHAQQLL (66 aa)) enclose the HTH luxR-type domain. A DNA-binding region (H-T-H motif) is located at residues 853–872 (NDQIAGELDVAATTIKTHIR).

Belongs to the MalT family. As to quaternary structure, monomer in solution. Oligomerizes to an active state in the presence of the positive effectors ATP and maltotriose.

With respect to regulation, activated by ATP and maltotriose, which are both required for DNA binding. Positively regulates the transcription of the maltose regulon whose gene products are responsible for uptake and catabolism of malto-oligosaccharides. Specifically binds to the promoter region of its target genes, recognizing a short DNA motif called the MalT box. This Cronobacter sakazakii (strain ATCC BAA-894) (Enterobacter sakazakii) protein is HTH-type transcriptional regulator MalT.